Reading from the N-terminus, the 448-residue chain is Adenylosuccinate synthetase 1 (448 aa).

Residues 22-28 (GDEGKGK) and 50-52 (GHT) contribute to the GTP site. Asp-23 (proton acceptor) is an active-site residue. Mg(2+) is bound by residues Asp-23 and Gly-50. IMP-binding positions include 23 to 26 (DEGK), 48 to 51 (NAGH), Thr-139, Arg-153, Gln-234, Thr-249, and Arg-321. His-51 functions as the Proton donor in the catalytic mechanism. Residue 317–323 (SVTGRPR) participates in substrate binding. GTP-binding positions include Arg-323, 349–351 (KLD), and 431–433 (STG).

This sequence belongs to the adenylosuccinate synthetase family. In terms of assembly, homodimer. Mg(2+) is required as a cofactor.

The protein resides in the cytoplasm. It carries out the reaction IMP + L-aspartate + GTP = N(6)-(1,2-dicarboxyethyl)-AMP + GDP + phosphate + 2 H(+). Its pathway is purine metabolism; AMP biosynthesis via de novo pathway; AMP from IMP: step 1/2. Functionally, plays an important role in the de novo pathway of purine nucleotide biosynthesis. Catalyzes the first committed step in the biosynthesis of AMP from IMP. The polypeptide is Adenylosuccinate synthetase 1 (Burkholderia lata (strain ATCC 17760 / DSM 23089 / LMG 22485 / NCIMB 9086 / R18194 / 383)).